A 348-amino-acid polypeptide reads, in one-letter code: MDRRDAMGLSGSGSYYIHRGLSGSGPPTFHGSPQQQQGLRHLPNQNSPFGSGSTGFGSPSLHGDPSLATAAGGAGALPHHIGVNMIAPPPPPSETPMKRKRGRPRKYGQDGSVSLALSSSSVSTITPNNSNKRGRGRPPGSGKKQRMASVGELMPSSSGMSFTPHVIAVSIGEDIASKVIAFSQQGPRAICVLSASGAVSTATLIQPSASPGAIKYEGRFEILALSTSYIVATDGSFRNRTGNLSVSLASPDGRVIGGAIGGPLIAASPVQVIVGSFIWAAPKIKSKKREEEASEVVQETDDHHVLDNNNNTISPVPQQQPNQNLIWSTGSRQMDMRHAHADIDLMRG.

A disordered region spans residues 18–156; that stretch reads HRGLSGSGPP…MASVGELMPS (139 aa). The segment covering 31–46 has biased composition (polar residues); the sequence is GSPQQQQGLRHLPNQN. The span at 47-60 shows a compositional bias: low complexity; the sequence is SPFGSGSTGFGSPS. Positions 98–106 match the Bipartite nuclear localization signal motif; sequence KRKRGRPRK. Positions 98–110 form a DNA-binding region, a.T hook 1; it reads KRKRGRPRKYGQD. Residues 112 to 131 are compositionally biased toward low complexity; the sequence is SVSLALSSSSVSTITPNNSN. Positions 132 to 144 form a DNA-binding region, a.T hook 2; that stretch reads KRGRGRPPGSGKK. Residues 157–299 enclose the PPC domain; sequence SSGMSFTPHV…EEEASEVVQE (143 aa).

It localises to the nucleus. Functionally, transcription factor that specifically binds AT-rich DNA sequences related to the nuclear matrix attachment regions (MARs). This Arabidopsis thaliana (Mouse-ear cress) protein is AT-hook motif nuclear-localized protein 9.